The following is a 391-amino-acid chain: Elongation factor Tu (391 aa).

Positions 10 to 201 (KPHVNIGTIG…AVDEFIPTPE (192 aa)) constitute a tr-type G domain. The interval 19–26 (GHVDHGKT) is G1. Residue 19 to 26 (GHVDHGKT) participates in GTP binding. Threonine 26 contacts Mg(2+). Residues 55–59 (GITIS) form a G2 region. The segment at 76–79 (DCPG) is G3. Residues 76–80 (DCPGH) and 131–134 (NKVD) each bind GTP. The tract at residues 131 to 134 (NKVD) is G4. The interval 169 to 171 (SAL) is G5.

This sequence belongs to the TRAFAC class translation factor GTPase superfamily. Classic translation factor GTPase family. EF-Tu/EF-1A subfamily. As to quaternary structure, monomer.

Its subcellular location is the cytoplasm. It carries out the reaction GTP + H2O = GDP + phosphate + H(+). Functionally, GTP hydrolase that promotes the GTP-dependent binding of aminoacyl-tRNA to the A-site of ribosomes during protein biosynthesis. The protein is Elongation factor Tu of Roseobacter denitrificans (strain ATCC 33942 / OCh 114) (Erythrobacter sp. (strain OCh 114)).